A 137-amino-acid chain; its full sequence is Phosphatidylinositol N-acetylglucosaminyltransferase subunit P (137 aa).

The next 2 membrane-spanning stretches (helical) occupy residues V16–G36 and M58–L78.

It belongs to the PIGP family.

Its subcellular location is the membrane. The enzyme catalyses a 1,2-diacyl-sn-glycero-3-phospho-(1D-myo-inositol) + UDP-N-acetyl-alpha-D-glucosamine = a 6-(N-acetyl-alpha-D-glucosaminyl)-1-(1,2-diacyl-sn-glycero-3-phospho)-1D-myo-inositol + UDP + H(+). It functions in the pathway glycolipid biosynthesis; glycosylphosphatidylinositol-anchor biosynthesis. In terms of biological role, part of the complex catalyzing the transfer of N-acetylglucosamine from UDP-N-acetylglucosamine to phosphatidylinositol, the first step of GPI biosynthesis. The chain is Phosphatidylinositol N-acetylglucosaminyltransferase subunit P from Arabidopsis thaliana (Mouse-ear cress).